A 493-amino-acid chain; its full sequence is Ketol-acid reductoisomerase (NADP(+)) (493 aa).

A KARI N-terminal Rossmann domain is found at L17–S208. NADP(+)-binding positions include C45–Q48, R68, R76, S78, and D108–Q110. H132 is an active-site residue. Position 158 (G158) interacts with NADP(+). KARI C-terminal knotted domains follow at residues S209–S344 and S345–M486. D217, E221, E389, and E393 together coordinate Mg(2+). S414 lines the substrate pocket.

The protein belongs to the ketol-acid reductoisomerase family. Mg(2+) serves as cofactor.

The catalysed reaction is (2R)-2,3-dihydroxy-3-methylbutanoate + NADP(+) = (2S)-2-acetolactate + NADPH + H(+). It catalyses the reaction (2R,3R)-2,3-dihydroxy-3-methylpentanoate + NADP(+) = (S)-2-ethyl-2-hydroxy-3-oxobutanoate + NADPH + H(+). It functions in the pathway amino-acid biosynthesis; L-isoleucine biosynthesis; L-isoleucine from 2-oxobutanoate: step 2/4. Its pathway is amino-acid biosynthesis; L-valine biosynthesis; L-valine from pyruvate: step 2/4. In terms of biological role, involved in the biosynthesis of branched-chain amino acids (BCAA). Catalyzes an alkyl-migration followed by a ketol-acid reduction of (S)-2-acetolactate (S2AL) to yield (R)-2,3-dihydroxy-isovalerate. In the isomerase reaction, S2AL is rearranged via a Mg-dependent methyl migration to produce 3-hydroxy-3-methyl-2-ketobutyrate (HMKB). In the reductase reaction, this 2-ketoacid undergoes a metal-dependent reduction by NADPH to yield (R)-2,3-dihydroxy-isovalerate. This is Ketol-acid reductoisomerase (NADP(+)) from Shewanella amazonensis (strain ATCC BAA-1098 / SB2B).